The following is a 343-amino-acid chain: Lipopolysaccharide core biosynthesis glycosyltransferase LpsD (343 aa).

The protein belongs to the glycosyltransferase group 1 family. Glycosyltransferase 4 subfamily.

Its pathway is bacterial outer membrane biogenesis; LPS core biosynthesis. The chain is Lipopolysaccharide core biosynthesis glycosyltransferase LpsD (lpsD) from Rhizobium meliloti (strain 1021) (Ensifer meliloti).